The primary structure comprises 335 residues: 3-ketodihydrosphingosine reductase TSC10 (335 aa).

The NADPH site is built by Gly-42, Ser-44, Ser-45, Gly-46, Arg-67, Asp-68, Lys-71, Asp-95, and Leu-96. The short motif at 42–46 (GGSSG) is the GXSXG element. The tract at residues 141 to 207 (LKDGLDGVYW…RGLSDALRSE (67 aa)) is involved in homodimer formation. Residue Tyr-190 is the Proton acceptor of the active site. Positions 190, 194, and 223 each coordinate NADP(+). Lys-194 (lowers pKa of active site Tyr) is an active-site residue. The chain crosses the membrane as a helical span at residues 288 to 308 (TNNFLLDTLWLIVSSVGVPIW).

This sequence belongs to the short-chain dehydrogenases/reductases (SDR) family. Homodimer; a minor portion forms homotetramers.

It is found in the endoplasmic reticulum membrane. The enzyme catalyses sphinganine + NADP(+) = 3-oxosphinganine + NADPH + H(+). The protein operates within lipid metabolism; sphingolipid metabolism. Its function is as follows. Catalyzes the reduction of 3'-oxosphinganine (3-ketodihydrosphingosine/KDS) to sphinganine (dihydrosphingosine/DHS), the second step of de novo sphingolipid biosynthesis. In Cryptococcus neoformans var. neoformans serotype D (strain JEC21 / ATCC MYA-565) (Filobasidiella neoformans), this protein is 3-ketodihydrosphingosine reductase TSC10 (TSC10).